The sequence spans 282 residues: 3-methyl-2-oxobutanoate hydroxymethyltransferase (282 aa).

Mg(2+)-binding residues include aspartate 44 and aspartate 83. 3-methyl-2-oxobutanoate-binding positions include aspartate 44–serine 45, aspartate 83, and lysine 112. Glutamate 114 provides a ligand contact to Mg(2+). The active-site Proton acceptor is glutamate 181.

This sequence belongs to the PanB family. As to quaternary structure, homodecamer; pentamer of dimers. The cofactor is Mg(2+).

The protein resides in the cytoplasm. The catalysed reaction is 3-methyl-2-oxobutanoate + (6R)-5,10-methylene-5,6,7,8-tetrahydrofolate + H2O = 2-dehydropantoate + (6S)-5,6,7,8-tetrahydrofolate. The protein operates within cofactor biosynthesis; coenzyme A biosynthesis. In terms of biological role, catalyzes the reversible reaction in which hydroxymethyl group from 5,10-methylenetetrahydrofolate is transferred onto alpha-ketoisovalerate to form ketopantoate. In Pyrococcus abyssi (strain GE5 / Orsay), this protein is 3-methyl-2-oxobutanoate hydroxymethyltransferase.